Reading from the N-terminus, the 454-residue chain is Guanine deaminase (454 aa).

Positions 82 and 84 each coordinate Zn(2+). Substrate-binding positions include 84 to 87, 213 to 214, 240 to 243, and Asp-330; these read HASQ, RF, and HISE. Residues His-240 and Asp-330 each contribute to the Zn(2+) site. Position 453 is a phosphoserine (Ser-453).

The protein belongs to the metallo-dependent hydrolases superfamily. ATZ/TRZ family. As to quaternary structure, homodimer. The cofactor is Zn(2+).

It catalyses the reaction guanine + H2O + H(+) = xanthine + NH4(+). It functions in the pathway purine metabolism; guanine degradation; xanthine from guanine: step 1/1. Its function is as follows. Catalyzes the hydrolytic deamination of guanine, producing xanthine and ammonia. This is Guanine deaminase (GDA) from Pongo abelii (Sumatran orangutan).